The following is a 332-amino-acid chain: Probable isoaspartyl peptidase/L-asparaginase CG7860 (332 aa).

The active-site Nucleophile is threonine 188. Substrate contacts are provided by residues 216-219 (RIGD) and 239-242 (TGHG).

The protein belongs to the Ntn-hydrolase family. In terms of assembly, heterodimer of an alpha and beta chain produced by autocleavage. Post-translationally, cleaved into an alpha and beta chain by autocatalysis; this activates the enzyme. The N-terminal residue of the beta subunit is responsible for the nucleophile hydrolase activity.

The catalysed reaction is L-asparagine + H2O = L-aspartate + NH4(+). The enzyme catalyses Cleavage of a beta-linked Asp residue from the N-terminus of a polypeptide.. Its function is as follows. Has both L-asparaginase and beta-aspartyl peptidase activity. Does not have aspartylglucosaminidase activity and is inactive toward GlcNAc-L-Asn. Likewise, has no activity toward glutamine. The protein is Probable isoaspartyl peptidase/L-asparaginase CG7860 of Drosophila melanogaster (Fruit fly).